Here is a 151-residue protein sequence, read N- to C-terminus: Deoxyuridine 5'-triphosphate nucleotidohydrolase (151 aa).

Substrate-binding positions include 70–72, asparagine 83, 87–89, and methionine 97; these read RSG and LID.

The protein belongs to the dUTPase family. Mg(2+) is required as a cofactor.

The catalysed reaction is dUTP + H2O = dUMP + diphosphate + H(+). Its pathway is pyrimidine metabolism; dUMP biosynthesis; dUMP from dCTP (dUTP route): step 2/2. This enzyme is involved in nucleotide metabolism: it produces dUMP, the immediate precursor of thymidine nucleotides and it decreases the intracellular concentration of dUTP so that uracil cannot be incorporated into DNA. In Mannheimia succiniciproducens (strain KCTC 0769BP / MBEL55E), this protein is Deoxyuridine 5'-triphosphate nucleotidohydrolase.